The following is a 294-amino-acid chain: Acetyl-coenzyme A carboxylase carboxyl transferase subunit beta (294 aa).

Residues 25–294 (VWTKCTACEQ…PFLEPEIIAD (270 aa)) form the CoA carboxyltransferase N-terminal domain. Zn(2+) contacts are provided by cysteine 29, cysteine 32, cysteine 48, and cysteine 51. The C4-type zinc-finger motif lies at 29–51 (CTACEQVLYRDELKRHLEVCPKC).

It belongs to the AccD/PCCB family. Acetyl-CoA carboxylase is a heterohexamer composed of biotin carboxyl carrier protein (AccB), biotin carboxylase (AccC) and two subunits each of ACCase subunit alpha (AccA) and ACCase subunit beta (AccD). It depends on Zn(2+) as a cofactor.

Its subcellular location is the cytoplasm. It carries out the reaction N(6)-carboxybiotinyl-L-lysyl-[protein] + acetyl-CoA = N(6)-biotinyl-L-lysyl-[protein] + malonyl-CoA. It participates in lipid metabolism; malonyl-CoA biosynthesis; malonyl-CoA from acetyl-CoA: step 1/1. Functionally, component of the acetyl coenzyme A carboxylase (ACC) complex. Biotin carboxylase (BC) catalyzes the carboxylation of biotin on its carrier protein (BCCP) and then the CO(2) group is transferred by the transcarboxylase to acetyl-CoA to form malonyl-CoA. The sequence is that of Acetyl-coenzyme A carboxylase carboxyl transferase subunit beta from Actinobacillus succinogenes (strain ATCC 55618 / DSM 22257 / CCUG 43843 / 130Z).